The sequence spans 508 residues: UDP-N-acetylmuramyl-tripeptide synthetase (508 aa).

Position 35 (S35) interacts with UDP-N-acetyl-alpha-D-muramoyl-L-alanyl-D-glutamate. Residue 118–124 (GTDGKSS) participates in ATP binding. UDP-N-acetyl-alpha-D-muramoyl-L-alanyl-D-glutamate contacts are provided by residues 163–164 (ST), T190, and R200. Position 232 is an N6-carboxylysine (K232).

The protein belongs to the MurCDEF family. MurE subfamily. In terms of processing, carboxylation is probably crucial for Mg(2+) binding and, consequently, for the gamma-phosphate positioning of ATP.

The protein resides in the cytoplasm. It participates in cell wall biogenesis; peptidoglycan biosynthesis. Its function is as follows. Catalyzes the addition of an amino acid to the nucleotide precursor UDP-N-acetylmuramoyl-L-alanyl-D-glutamate (UMAG) in the biosynthesis of bacterial cell-wall peptidoglycan. The polypeptide is UDP-N-acetylmuramyl-tripeptide synthetase (Borrelia garinii subsp. bavariensis (strain ATCC BAA-2496 / DSM 23469 / PBi) (Borreliella bavariensis)).